The following is a 495-amino-acid chain: uncharacterized protein (495 aa).

Over residues 305 to 317 (DYNNNNNENYSGS) the composition is skewed to low complexity. The tract at residues 305–404 (DYNNNNNENY…LDEEDNRKNK (100 aa)) is disordered. Residues 335–347 (YDNDENNDDENND) are compositionally biased toward acidic residues. Over residues 348-363 (ENNNNNNNNNNNNNNN) the composition is skewed to low complexity. Positions 386–398 (SDDDEADNELDEE) are enriched in acidic residues.

This is an uncharacterized protein from Dictyostelium discoideum (Social amoeba).